The sequence spans 304 residues: Large ribosomal subunit protein uL18 (304 aa).

Residues 285–304 are disordered; sequence LNALNSSAGADDDDEEEDDE. The segment covering 294 to 304 has biased composition (acidic residues); the sequence is ADDDDEEEDDE.

It belongs to the universal ribosomal protein uL18 family. Component of the large ribosomal subunit (LSU).

It is found in the cytoplasm. The protein resides in the nucleus. Component of the ribosome, a large ribonucleoprotein complex responsible for the synthesis of proteins in the cell. The small ribosomal subunit (SSU) binds messenger RNAs (mRNAs) and translates the encoded message by selecting cognate aminoacyl-transfer RNA (tRNA) molecules. The large subunit (LSU) contains the ribosomal catalytic site termed the peptidyl transferase center (PTC), which catalyzes the formation of peptide bonds, thereby polymerizing the amino acids delivered by tRNAs into a polypeptide chain. The nascent polypeptides leave the ribosome through a tunnel in the LSU and interact with protein factors that function in enzymatic processing, targeting, and the membrane insertion of nascent chains at the exit of the ribosomal tunnel. In Oryza sativa subsp. indica (Rice), this protein is Large ribosomal subunit protein uL18 (RPL5A).